A 165-amino-acid polypeptide reads, in one-letter code: MNEIVQLFLLIWPPYVANGSAVLAARLRRRHPLDFGKNFLDGRRIFGDGKTFEGVAIGVSAGTLLGYAPNLAYSYLTLLDAFLLATAAIVGDLLGAFVKRRLCMPRGYPAFPLDQLDFLLMALLVYSLYRELHIPLLLAAVVLTPVIHRATNYAAYKLRLKKEPW.

3 consecutive transmembrane segments (helical) span residues 4 to 24, 78 to 98, and 118 to 138; these read IVQLFLLIWPPYVANGSAVLA, LLDAFLLATAAIVGDLLGAFV, and FLLMALLVYSLYRELHIPLLL.

The protein belongs to the CDP-archaeol synthase family. Requires Mg(2+) as cofactor.

The protein resides in the cell membrane. It carries out the reaction 2,3-bis-O-(geranylgeranyl)-sn-glycerol 1-phosphate + CTP + H(+) = CDP-2,3-bis-O-(geranylgeranyl)-sn-glycerol + diphosphate. The protein operates within membrane lipid metabolism; glycerophospholipid metabolism. In terms of biological role, catalyzes the formation of CDP-2,3-bis-(O-geranylgeranyl)-sn-glycerol (CDP-archaeol) from 2,3-bis-(O-geranylgeranyl)-sn-glycerol 1-phosphate (DGGGP) and CTP. This reaction is the third ether-bond-formation step in the biosynthesis of archaeal membrane lipids. The protein is CDP-archaeol synthase of Pyrobaculum calidifontis (strain DSM 21063 / JCM 11548 / VA1).